Consider the following 67-residue polypeptide: ATP synthase F(0) complex subunit 8 (67 aa).

The chain crosses the membrane as a helical span at residues Thr-8–Phe-24. N6-acetyllysine; alternate is present on Lys-54. Lys-54 is modified (N6-succinyllysine; alternate). The residue at position 57 (Lys-57) is an N6-acetyllysine.

It belongs to the ATPase protein 8 family. Component of the ATP synthase complex composed at least of ATP5F1A/subunit alpha, ATP5F1B/subunit beta, ATP5MC1/subunit c (homooctomer), MT-ATP6/subunit a, MT-ATP8/subunit 8, ATP5ME/subunit e, ATP5MF/subunit f, ATP5MG/subunit g, ATP5MK/subunit k, ATP5MJ/subunit j, ATP5F1C/subunit gamma, ATP5F1D/subunit delta, ATP5F1E/subunit epsilon, ATP5PF/subunit F6, ATP5PB/subunit b, ATP5PD/subunit d, ATP5PO/subunit OSCP. ATP synthase complex consists of a soluble F(1) head domain (subunits alpha(3) and beta(3)) - the catalytic core - and a membrane F(0) domain - the membrane proton channel (subunits c, a, 8, e, f, g, k and j). These two domains are linked by a central stalk (subunits gamma, delta, and epsilon) rotating inside the F1 region and a stationary peripheral stalk (subunits F6, b, d, and OSCP). Interacts with PRICKLE3.

It localises to the mitochondrion membrane. In terms of biological role, subunit 8, of the mitochondrial membrane ATP synthase complex (F(1)F(0) ATP synthase or Complex V) that produces ATP from ADP in the presence of a proton gradient across the membrane which is generated by electron transport complexes of the respiratory chain. ATP synthase complex consist of a soluble F(1) head domain - the catalytic core - and a membrane F(1) domain - the membrane proton channel. These two domains are linked by a central stalk rotating inside the F(1) region and a stationary peripheral stalk. During catalysis, ATP synthesis in the catalytic domain of F(1) is coupled via a rotary mechanism of the central stalk subunits to proton translocation. In vivo, can only synthesize ATP although its ATP hydrolase activity can be activated artificially in vitro. Part of the complex F(0) domain. The protein is ATP synthase F(0) complex subunit 8 of Talpa europaea (European mole).